Reading from the N-terminus, the 790-residue chain is Phenylalanine--tRNA ligase beta subunit (790 aa).

In terms of domain architecture, tRNA-binding spans 40 to 149 (AEKVSGVVVG…IDAPVGTDIN (110 aa)). One can recognise a B5 domain in the interval 402–479 (NKQIKINLSI…RIYGYSKLPE (78 aa)). Residues Asp-457, Asp-463, Glu-466, and Glu-467 each coordinate Mg(2+). Residues 698–789 (SKYPSVSRDI…LKTKFNIEQR (92 aa)) form the FDX-ACB domain.

Belongs to the phenylalanyl-tRNA synthetase beta subunit family. Type 1 subfamily. As to quaternary structure, tetramer of two alpha and two beta subunits. Mg(2+) is required as a cofactor.

It localises to the cytoplasm. The catalysed reaction is tRNA(Phe) + L-phenylalanine + ATP = L-phenylalanyl-tRNA(Phe) + AMP + diphosphate + H(+). The sequence is that of Phenylalanine--tRNA ligase beta subunit from Francisella tularensis subsp. tularensis (strain SCHU S4 / Schu 4).